Consider the following 380-residue polypeptide: MKLLARALRLCEFGRQASSRRLVAGQGCVGPRRGCCAPVQVVGPRADLPPCGACITGRIMRPDDANVAGNVHGGTILKMIEEAGAIISTRHCNSQNGERCVAALARVERTDFLSPMCIGEVAHVSAEITYTSKHSVEVQVNVMSENILTGAKKLTNKATLWYVPLSLKNVDKVLEVPPVVYSRQEQEEEGRKRYEAQKLERMETKWRNGDIVQPVLNPEPNTVSYSQSSLIHLVGPSDCTLHGFVHGGVTMKLMDEVAGIVAARHCKTNIVTASVDAINFHDKIRKGCVITISGRMTFTSNKSMEIEVLVDADPVVDSSQKRYRAASAFFTYVSLSQEGRSLPVPQLVPETEDEKKRFEEGKGRYLQMKAKRQGHAEPQP.

Residues 50–168 enclose the HotDog ACOT-type 1 domain; it reads PCGACITGRI…TLWYVPLSLK (119 aa). The active site involves N66. K168 and K198 each carry N6-acetyllysine. A HotDog ACOT-type 2 domain is found at 224 to 338; sequence SYSQSSLIHL…FFTYVSLSQE (115 aa). The active site involves D255. N6-acetyllysine is present on K283. Residues 350-380 form a disordered region; sequence ETEDEKKRFEEGKGRYLQMKAKRQGHAEPQP. The segment covering 353-363 has biased composition (basic and acidic residues); that stretch reads DEKKRFEEGKG.

Homohexamer. As to expression, isoform 4 is expressed exclusively in brain.

It localises to the cytoplasm. Its subcellular location is the cytosol. The protein resides in the mitochondrion. The enzyme catalyses hexadecanoyl-CoA + H2O = hexadecanoate + CoA + H(+). It catalyses the reaction octanoyl-CoA + H2O = octanoate + CoA + H(+). It carries out the reaction dodecanoyl-CoA + H2O = dodecanoate + CoA + H(+). The catalysed reaction is (9Z)-octadecenoyl-CoA + H2O = (9Z)-octadecenoate + CoA + H(+). The enzyme catalyses tetradecanoyl-CoA + H2O = tetradecanoate + CoA + H(+). It catalyses the reaction decanoyl-CoA + H2O = decanoate + CoA + H(+). It carries out the reaction octadecanoyl-CoA + H2O = octadecanoate + CoA + H(+). Its pathway is lipid metabolism; fatty acid metabolism. Functionally, catalyzes the hydrolysis of acyl-CoAs into free fatty acids and coenzyme A (CoASH), regulating their respective intracellular levels. Preferentially hydrolyzes palmitoyl-CoA, but has a broad specificity acting on other fatty acyl-CoAs with chain-lengths of C8-C18. May play an important physiological function in brain. The chain is Cytosolic acyl coenzyme A thioester hydrolase (ACOT7) from Homo sapiens (Human).